The primary structure comprises 465 residues: Ribulose bisphosphate carboxylase large chain (465 aa).

At Lys4 the chain carries N6,N6,N6-trimethyllysine. The substrate site is built by Asn113 and Thr163. Lys165 functions as the Proton acceptor in the catalytic mechanism. Lys167 contributes to the substrate binding site. The Mg(2+) site is built by Lys191, Asp193, and Glu194. Lys191 bears the N6-carboxylysine mark. His284 functions as the Proton acceptor in the catalytic mechanism. Arg285, His317, and Ser369 together coordinate substrate.

The protein belongs to the RuBisCO large chain family. Type I subfamily. Heterohexadecamer of 8 large chains and 8 small chains; disulfide-linked. The disulfide link is formed within the large subunit homodimers. Mg(2+) is required as a cofactor. The disulfide bond which can form in the large chain dimeric partners within the hexadecamer appears to be associated with oxidative stress and protein turnover.

The protein resides in the plastid. The protein localises to the chloroplast. It carries out the reaction 2 (2R)-3-phosphoglycerate + 2 H(+) = D-ribulose 1,5-bisphosphate + CO2 + H2O. The catalysed reaction is D-ribulose 1,5-bisphosphate + O2 = 2-phosphoglycolate + (2R)-3-phosphoglycerate + 2 H(+). Functionally, ruBisCO catalyzes two reactions: the carboxylation of D-ribulose 1,5-bisphosphate, the primary event in carbon dioxide fixation, as well as the oxidative fragmentation of the pentose substrate in the photorespiration process. Both reactions occur simultaneously and in competition at the same active site. This is Ribulose bisphosphate carboxylase large chain from Ailanthus altissima (Tree-of-heaven).